Consider the following 394-residue polypeptide: Histidinol dehydrogenase (394 aa).

The NAD(+) site is built by tyrosine 113, glutamine 172, and asparagine 195. Positions 218, 240, and 243 each coordinate substrate. The Zn(2+) site is built by glutamine 240 and histidine 243. Catalysis depends on proton acceptor residues glutamate 294 and histidine 295. Residues histidine 295, aspartate 327, glutamate 380, and histidine 385 each coordinate substrate. Aspartate 327 lines the Zn(2+) pocket. Position 385 (histidine 385) interacts with Zn(2+).

This sequence belongs to the histidinol dehydrogenase family. Zn(2+) is required as a cofactor.

It carries out the reaction L-histidinol + 2 NAD(+) + H2O = L-histidine + 2 NADH + 3 H(+). Its pathway is amino-acid biosynthesis; L-histidine biosynthesis; L-histidine from 5-phospho-alpha-D-ribose 1-diphosphate: step 9/9. Functionally, catalyzes the sequential NAD-dependent oxidations of L-histidinol to L-histidinaldehyde and then to L-histidine. This is Histidinol dehydrogenase from Sulfurisphaera tokodaii (strain DSM 16993 / JCM 10545 / NBRC 100140 / 7) (Sulfolobus tokodaii).